A 259-amino-acid polypeptide reads, in one-letter code: MFGLIHNPPHAGRLPAAATTLVEARGLTVRRGDQPVLCNVDLVVESGQVVTLVGPNGSGKSTLVQVLTGVIRDYRGQVGRRTGLRVGYVPQHFRIDRNLPITVRRFMKLAPRGRRGHWAEAVADAGVSQLLDRPMQGLSGGELRRVLLARALLSRPHLLALDEPAAGLDQRGQGELYRLIRHVRDRYGCGVLVVSHDLNLVMAATDQVLCLSEGHILCRGAPESVRAHPEYRALFGAHLGPETAVFPHAHGPGEGCTHG.

In terms of domain architecture, ABC transporter spans valine 22 to histidine 238. Residue glycine 54 to serine 61 coordinates ATP.

It belongs to the ABC transporter superfamily. Zinc importer (TC 3.A.1.15.5) family. As to quaternary structure, the complex is composed of two ATP-binding proteins (ZnuC), two transmembrane proteins (ZnuB) and a solute-binding protein (ZnuA).

The protein resides in the cell inner membrane. It carries out the reaction Zn(2+)(out) + ATP(in) + H2O(in) = Zn(2+)(in) + ADP(in) + phosphate(in) + H(+)(in). Functionally, part of the ABC transporter complex ZnuABC involved in zinc import. Responsible for energy coupling to the transport system. The polypeptide is Zinc import ATP-binding protein ZnuC (Alkalilimnicola ehrlichii (strain ATCC BAA-1101 / DSM 17681 / MLHE-1)).